Here is an 85-residue protein sequence, read N- to C-terminus: Small ribosomal subunit protein bS16 (85 aa).

Belongs to the bacterial ribosomal protein bS16 family.

The protein is Small ribosomal subunit protein bS16 of Rubrobacter xylanophilus (strain DSM 9941 / JCM 11954 / NBRC 16129 / PRD-1).